Consider the following 454-residue polypeptide: MDILLLGLNYKTAPVEIREKFTFSDDGTARALHLLSQTKSIAECIILGTCNRTEIYVVCDQANIGRDYTRRFLAEWFGVEKEQFKDHLYIKENEQAIEHLFRVSSGLDSMVMGETQILGQVRDAFLLGQEHQTTGTVFNTLFKQAITFAKRAHTETAIGQNAVSVSYAAVELGKKIFGSFAGKSVLIVGAGKMSELTAKHLHANGSERVMVANRTLERAQLLAEKFKGDSCTMEQLPEALLTADIVISSTGATGYVLGKKELAPIMKQRKHRPLFMVDIAVPRDLNPDLHDLDNVFLYDIDDLEGIVASNVAERSREAERLDVMIQEEIVAFTTWYQTLGVAPLIAALRDKANTIQSEAMRKIENKLPNLSEREMHIIRKTTKGIVNQLLHDPVVRLKEMAATKDGEEVLDIFEKMFALEEILERKEQEAIWANDKNKQTSSSREQVLVSRFPD.

Residues 49-52 (TCNR), Ser109, 114-116 (ETQ), and Gln120 each bind substrate. The active-site Nucleophile is the Cys50. Position 189-194 (189-194 (GAGKMS)) interacts with NADP(+). The segment at 434–454 (NDKNKQTSSSREQVLVSRFPD) is disordered.

Belongs to the glutamyl-tRNA reductase family. As to quaternary structure, homodimer.

It carries out the reaction (S)-4-amino-5-oxopentanoate + tRNA(Glu) + NADP(+) = L-glutamyl-tRNA(Glu) + NADPH + H(+). It functions in the pathway porphyrin-containing compound metabolism; protoporphyrin-IX biosynthesis; 5-aminolevulinate from L-glutamyl-tRNA(Glu): step 1/2. Functionally, catalyzes the NADPH-dependent reduction of glutamyl-tRNA(Glu) to glutamate 1-semialdehyde (GSA). The sequence is that of Glutamyl-tRNA reductase from Brevibacillus brevis (strain 47 / JCM 6285 / NBRC 100599).